A 406-amino-acid polypeptide reads, in one-letter code: Putative colanic acid biosynthesis glycosyltransferase WcaL (406 aa).

It belongs to the glycosyltransferase group 1 family. Glycosyltransferase 4 subfamily.

It participates in slime biogenesis; slime polysaccharide biosynthesis. The polypeptide is Putative colanic acid biosynthesis glycosyltransferase WcaL (wcaL) (Salmonella typhimurium (strain LT2 / SGSC1412 / ATCC 700720)).